A 3483-amino-acid chain; its full sequence is Nonribosomal peptide synthetase Ao415 (3483 aa).

Positions 281–669 (TFKKLNETSN…DVHPLIKDVV (389 aa)) are adenylation 1. Positions 775-851 (EVFDELSTKI…GLRDHVSGKK (77 aa)) constitute a Carrier 1 domain. O-(pantetheine 4'-phosphoryl)serine is present on Ser-812. The interval 886-1297 (ANVLPCSPMQ…YCLLHMLQNQ (412 aa)) is condensation 1. An adenylation 2 region spans residues 1363–1758 (TYRQFDDMGN…SADKDVAEIV (396 aa)). Residues 1865–1941 (EELSETEKVI…SLAKALSSAN (77 aa)) enclose the Carrier 2 domain. O-(pantetheine 4'-phosphoryl)serine is present on Ser-1901. The segment at 1981–2379 (IKPCTPLQEG…LLKNPEQEVA (399 aa)) is condensation 2. In terms of domain architecture, Carrier 3 spans 2412-2485 (TEAAVSIRRE…RMVVYLSSTK (74 aa)). The residue at position 2446 (Ser-2446) is an O-(pantetheine 4'-phosphoryl)serine. The condensation 3 stretch occupies residues 2520–2917 (ESILPTTPLQ…MLQKIIGNPL (398 aa)). The Carrier 4 domain maps to 2954–3030 (DNYQNLERQV…KICLFLDKKQ (77 aa)). O-(pantetheine 4'-phosphoryl)serine is present on Ser-2991. The interval 3084–3368 (SEGRIFLPTF…VQEDLLKIST (285 aa)) is condensation 4.

Belongs to the NRP synthetase family.

Its pathway is siderophore biosynthesis. In terms of biological role, nonribosomal peptide synthetase; part of the gene cluster that mediates the biosynthesis of desferriferrichrome that chelates Fe(3+) to form ferrichrome. Fe(3+) is a key factor for induction of trap formation and the fungus uses the iron chelating desferriferrichrome to sequester Fe(3+) to inhibit trap formation and increase nematicidal activity. The biosynthesis of desferriferrichrome requires the action of the L-ornithine N(5)-oxygenase (LOO) Ao414 that hydroxylates L-ornithine at N(5), resulting in the formation of N(5)-hydroxyl-L-ornithine, which is subsequently N-acetylated to yield N(5)-acetyl-N(5)-hydroxy-L-ornithine (L-AHO). L-AHO harbors one hydroxamate moiety, which is the key core responsible for chelating iron. Then, L-AHO is further condensated with glycines to form desferriferrichrome through the NRPS protein Ao415. This Arthrobotrys oligospora (strain ATCC 24927 / CBS 115.81 / DSM 1491) (Nematode-trapping fungus) protein is Nonribosomal peptide synthetase Ao415.